Consider the following 594-residue polypeptide: Class I diterpene synthase TPS6, chloroplastic (594 aa).

Mg(2+)-binding residues include Asp330, Asp334, Asn474, Gln477, and Glu482. A DDXXD motif motif is present at residues Asp330–Asp334.

Belongs to the terpene synthase family. Requires Mg(2+) as cofactor. Mostly expressed in trichomes of leaves and fruits.

The protein resides in the plastid. It is found in the chloroplast. The catalysed reaction is peregrinol diphosphate = labd-13(16),14-diene-9-ol + diphosphate. It carries out the reaction 9alpha-copalyl diphosphate = syn-isopimara-7,15-diene + diphosphate. Its pathway is secondary metabolite biosynthesis; terpenoid biosynthesis. In terms of biological role, involved in the biosynthesis of labdane-type diterpenoid including cleroda-dienols, and peregrinol lactones and furan derivatives, dopaminergic diterpenoids that can bind to dopamine receptors in the human pituitary gland, have probably ability to lower prolactin levels, and are used to treat menstrual cycle disorders (e.g. premenstrual syndrome and mastodynia). Terpene synthase the catalyzes the conversion of peregrinol diphosphate to labda-13(16),14-dien-9-ol, and of syn-copalyl diphosophate to dehydroabietadiene and syn-isopimara-7,15-diene. This is Class I diterpene synthase TPS6, chloroplastic from Vitex agnus-castus (Chaste tree).